A 538-amino-acid polypeptide reads, in one-letter code: DALR anticodon-binding domain-containing protein 3 (538 aa).

In terms of assembly, part of a complex containing tRNA(Arg) and METTL2. Interacts with tRNA(Arg)(CCU) and tRNA(Arg)(UCU). Interacts with METTL2.

Functionally, involved in tRNA methylation. Facilitates the recognition and targeting of tRNA(Arg)(CCU) and tRNA(Arg)(UCU) substrates for N(3)-methylcytidine modification by METTL2. In Mus musculus (Mouse), this protein is DALR anticodon-binding domain-containing protein 3 (Dalrd3).